The chain runs to 199 residues: MSTAPKDIETLIDLMARLPGLGPRSARRAVLFLLGKNRRLLAPLGEAMTAVAQTARDCLNCGNIGTSDICDICTSEKRATGEICVVEDVADLWAMERAGVFKGRYHVLGGTLSALDAVGPEELRIPKLRDRAVSEGATEIILALGATVDGQTTAHYIAEALEGTGVAVTSLAQGVPIGGELDYLDDGTITAALRARKSF.

The C4-type zinc finger occupies 58 to 73 (CLNCGNIGTSDICDIC). The region spanning 81–176 (GEICVVEDVA…AVTSLAQGVP (96 aa)) is the Toprim domain.

The protein belongs to the RecR family.

May play a role in DNA repair. It seems to be involved in an RecBC-independent recombinational process of DNA repair. It may act with RecF and RecO. This chain is Recombination protein RecR, found in Dinoroseobacter shibae (strain DSM 16493 / NCIMB 14021 / DFL 12).